The primary structure comprises 295 residues: MIKYYNRKTNDYDIEKVAGEKYLNWTYSSPMGMNLLEIFIKKKFFSKIYGFYCDRRLSHNKIDKFINDFQIDMSLCENQTSDFKCFNDFFTRKLKKEARPIKADKNILISPGDGKILAYKNLNLNSVTEVKGINYSFYELINNDSLAKEYDNGTCLILRLCPTDYHRFHFIDNGTCENTIKLDGFYYSVNPIALSKIPSLFCKNKREYAIFHSENFGDVIFMEVGATCVGSIIQTYKPNTKIFKGDEKGYFKFGGSTVILFFKENTIKVDNDILNQSKLGYETSVIMGEPIGSKK.

Catalysis depends on charge relay system; for autoendoproteolytic cleavage activity residues Asp-113, His-169, and Ser-256. The Schiff-base intermediate with substrate; via pyruvic acid; for decarboxylase activity role is filled by Ser-256. Position 256 is a pyruvic acid (Ser); by autocatalysis (Ser-256).

Belongs to the phosphatidylserine decarboxylase family. PSD-B subfamily. Prokaryotic type II sub-subfamily. Heterodimer of a large membrane-associated beta subunit and a small pyruvoyl-containing alpha subunit. Pyruvate is required as a cofactor. Post-translationally, is synthesized initially as an inactive proenzyme. Formation of the active enzyme involves a self-maturation process in which the active site pyruvoyl group is generated from an internal serine residue via an autocatalytic post-translational modification. Two non-identical subunits are generated from the proenzyme in this reaction, and the pyruvate is formed at the N-terminus of the alpha chain, which is derived from the carboxyl end of the proenzyme. The autoendoproteolytic cleavage occurs by a canonical serine protease mechanism, in which the side chain hydroxyl group of the serine supplies its oxygen atom to form the C-terminus of the beta chain, while the remainder of the serine residue undergoes an oxidative deamination to produce ammonia and the pyruvoyl prosthetic group on the alpha chain. During this reaction, the Ser that is part of the protease active site of the proenzyme becomes the pyruvoyl prosthetic group, which constitutes an essential element of the active site of the mature decarboxylase.

The protein resides in the cell membrane. The enzyme catalyses a 1,2-diacyl-sn-glycero-3-phospho-L-serine + H(+) = a 1,2-diacyl-sn-glycero-3-phosphoethanolamine + CO2. The protein operates within phospholipid metabolism; phosphatidylethanolamine biosynthesis; phosphatidylethanolamine from CDP-diacylglycerol: step 2/2. Catalyzes the formation of phosphatidylethanolamine (PtdEtn) from phosphatidylserine (PtdSer). This chain is Phosphatidylserine decarboxylase proenzyme, found in Clostridium botulinum (strain Kyoto / Type A2).